Consider the following 334-residue polypeptide: Protein-methionine-sulfoxide reductase catalytic subunit MsrP (334 aa).

Residues 1 to 44 constitute a signal peptide (tat-type signal); it reads MKKNQFLKESDVTAESVFFMKRRQVLKALGISAAALSLPHAAHA. Mo-molybdopterin-binding positions include Asn88, 91–92, Cys146, Thr181, Asn233, Arg238, and 249–251; these read YE and GIK.

The protein belongs to the MsrP family. As to quaternary structure, heterodimer of a catalytic subunit (MsrP) and a heme-binding subunit (MsrQ). The cofactor is Mo-molybdopterin. Post-translationally, predicted to be exported by the Tat system. The position of the signal peptide cleavage has not been experimentally proven.

It localises to the periplasm. It catalyses the reaction L-methionyl-[protein] + a quinone + H2O = L-methionyl-(S)-S-oxide-[protein] + a quinol. The enzyme catalyses L-methionyl-[protein] + a quinone + H2O = L-methionyl-(R)-S-oxide-[protein] + a quinol. Functionally, part of the MsrPQ system that repairs oxidized periplasmic proteins containing methionine sulfoxide residues (Met-O), using respiratory chain electrons. Thus protects these proteins from oxidative-stress damage caused by reactive species of oxygen and chlorine generated by the host defense mechanisms. MsrPQ is essential for the maintenance of envelope integrity under bleach stress, rescuing a wide series of structurally unrelated periplasmic proteins from methionine oxidation, including the primary periplasmic chaperone SurA and the lipoprotein Pal. The catalytic subunit MsrP is non-stereospecific, being able to reduce both (R-) and (S-) diastereoisomers of methionine sulfoxide. In Shigella boydii serotype 18 (strain CDC 3083-94 / BS512), this protein is Protein-methionine-sulfoxide reductase catalytic subunit MsrP.